The chain runs to 234 residues: C2H2-type zinc-finger transcription factor clz7 (234 aa).

Disordered stretches follow at residues arginine 45–aspartate 99 and serine 118–alanine 154. Low complexity-rich tracts occupy residues serine 66–serine 77 and serine 140–alanine 154. Residues asparagine 159–asparagine 184 form a C2H2-type 1; degenerate zinc finger. Residues phenylalanine 191–asparagine 223 form a C2H2-type 2; degenerate zinc finger.

It belongs to the GLI C2H2-type zinc-finger protein family.

Its subcellular location is the nucleus. Its function is as follows. Transcription factor that probably regulates the expression of the gene cluster that mediates the biosynthesis of squalestatin S1 (SQS1, also known as zaragozic acid A), a heavily oxidized fungal polyketide that offers potent cholesterol lowering activity by targeting squalene synthase (SS). This chain is C2H2-type zinc-finger transcription factor clz7, found in Cochliobolus lunatus (Filamentous fungus).